The primary structure comprises 424 residues: Inhibin beta A chain (424 aa).

Positions Met-1–Ser-20 are cleaved as a signal peptide. Positions Ser-21–Arg-308 are excised as a propeptide. N-linked (GlcNAc...) asparagine glycosylation is present at Asn-165. The tract at residues Lys-257–Arg-288 is disordered. The segment covering Lys-261 to Gly-273 has biased composition (basic and acidic residues). 4 disulfides stabilise this stretch: Cys-312/Cys-320, Cys-319/Cys-389, Cys-348/Cys-421, and Cys-352/Cys-423.

The protein belongs to the TGF-beta family. As to quaternary structure, dimeric, linked by one or more disulfide bonds. Inhibin A is a dimer of alpha/INHA and beta-A/INHBA. Activin A is a homodimer of beta-A/INHBA. Activin AB is a dimer of beta-A/INHBA and beta-B/INHBB. Interacts with FST and FSTL3; these interactions prevent activin A interaction to its type II receptor. Activin A interacts with ACVR2A. Activin A interacts with BMPR2. Inhibin A interacts with ACVR1; this interaction creates a non-signaling complex (NSC) that inhibits ACVR1-mediated BMP signaling. Inhibin A interacts with ACVR2A.

The protein localises to the secreted. In terms of biological role, inhibins/activins are involved in regulating a number of diverse functions such as hypothalamic and pituitary hormone secretion, gonadal hormone secretion, germ cell development and maturation, erythroid differentiation, insulin secretion, nerve cell survival, embryonic axial development or bone growth, depending on their subunit composition. Its function is as follows. Activin A is a homodimer of INHBA that plays a role in several essential biological processes including embryonic development, stem cell maintenance and differentiation, haematopoiesis, cell proliferation and tissue fibrosis. Signals through type I (such as ACVR1B or ACVR1C) and type II receptors (such as ACVR2A, ACVR2B or BMPR2) which, upon ligand binding, phosphorylate SMAD2 and SMAD3 intracellular signaling mediators that form a complex with SMAD4, translocate to the nucleus and modulate gene expression. Can also activate alternative non-canonical intracellular signaling pathways including the p38 MAPK, extracellular signal-regulated kinases 1/2 (ERK1/2) and c-Jun N-terminal kinases (JNKs) to modulate cell migration and differentiation. Alternatively, promotes osteoblastic differentiation via ACVRL1-SMAD1/5/9 pathway. In addition, can engage the type I receptor ACVR1 to form an ACVR1-activin A-type II receptor non-signaling complex (NSC) that renders receptors unavailable for engagement with BMPs, hence resulting in an apparent inhibition of ACVR1-mediated BMP signaling. Inhibin A is a dimer of alpha/INHA and beta-A/INHBA that functions as a feedback regulator in the hypothalamic-pituitary-gonadal (HPG) axis. Inhibits the secretion of FSH from the anterior pituitary gland by acting on pituitary gonadotrope cells. Antagonizes activin A by binding to the proteoglycan, betaglycan, and forming a stable complex with and, thereby, sequestering type II activin receptors while excluding type I receptor. This Felis catus (Cat) protein is Inhibin beta A chain (INHBA).